The following is a 181-amino-acid chain: High mobility group protein B4 (181 aa).

The segment at residues 9 to 79 is a DNA-binding region (HMG box 1); it reads PKVNVSSYIH…RYQQEMMNYI (71 aa). Residues 80-89 show a composition bias toward basic residues; that stretch reads GKRRKRRKRD. The segment at 80–100 is disordered; it reads GKRRKRRKRDPKAPRKPPSSF. The segment at residues 93–161 is a DNA-binding region (HMG box 2); sequence PRKPPSSFLL…KYFEEQEAYR (69 aa).

This sequence belongs to the HMGB family. Expressed in adult germ cells (at protein level).

Its subcellular location is the nucleus. The protein resides in the chromosome. The polypeptide is High mobility group protein B4 (Hmgb4) (Mus musculus (Mouse)).